Reading from the N-terminus, the 465-residue chain is Sodium-coupled neutral amino acid transporter 7 (465 aa).

11 helical membrane-spanning segments follow: residues 54–74, 82–102, 128–148, 177–197, 204–224, 244–264, 275–295, 318–338, 370–390, 394–414, and 427–447; these read AVFI…PAAF, AGVT…VILA, ICEL…LIII, FTIT…KEIG, TLSV…YIWP, FNAM…VPVF, WWGV…GTGV, VAVA…YPIL, ILQT…IPDI, ISLI…LCLI, and SWNA…FIFG.

It belongs to the amino acid/polyamine transporter 2 family.

It is found in the lysosome membrane. It localises to the cell projection. Its subcellular location is the axon. It catalyses the reaction L-asparagine(in) + Na(+)(in) = L-asparagine(out) + Na(+)(out). The catalysed reaction is L-glutamine(in) + Na(+)(in) = L-glutamine(out) + Na(+)(out). Functionally, symporter that selectively cotransports sodium ions and amino acids, such as L-glutamine and L-asparagine from the lysosome into the cytoplasm and may participates in mTORC1 activation. The transport activity requires an acidic lysosomal lumen. This chain is Sodium-coupled neutral amino acid transporter 7, found in Danio rerio (Zebrafish).